The primary structure comprises 205 residues: Large ribosomal subunit protein uL4 (205 aa).

A disordered region spans residues 56–78; that stretch reads ISGTTAKPYRQKHTGRARQGSLR.

It belongs to the universal ribosomal protein uL4 family. As to quaternary structure, part of the 50S ribosomal subunit.

Its function is as follows. One of the primary rRNA binding proteins, this protein initially binds near the 5'-end of the 23S rRNA. It is important during the early stages of 50S assembly. It makes multiple contacts with different domains of the 23S rRNA in the assembled 50S subunit and ribosome. In terms of biological role, forms part of the polypeptide exit tunnel. The protein is Large ribosomal subunit protein uL4 of Ehrlichia canis (strain Jake).